Consider the following 431-residue polypeptide: Adenosylhomocysteinase (431 aa).

T56, D131, and E156 together coordinate substrate. 157–159 (TTT) is a binding site for NAD(+). Residues K186 and D190 each coordinate substrate. Residues N191, 222–227 (GDVGKG), E243, 299–301 (IGH), and N345 each bind NAD(+).

Belongs to the adenosylhomocysteinase family. Homotetramer. NAD(+) is required as a cofactor.

The catalysed reaction is S-adenosyl-L-homocysteine + H2O = L-homocysteine + adenosine. It participates in amino-acid biosynthesis; L-homocysteine biosynthesis; L-homocysteine from S-adenosyl-L-homocysteine: step 1/1. Its function is as follows. Adenosylhomocysteine is a competitive inhibitor of S-adenosyl-L-methionine-dependent methyl transferase reactions; therefore adenosylhomocysteinase may play a key role in the control of methylations via regulation of the intracellular concentration of adenosylhomocysteine. The chain is Adenosylhomocysteinase (sahA) from Dictyostelium discoideum (Social amoeba).